We begin with the raw amino-acid sequence, 188 residues long: Photosystem I assembly protein Ycf4 (188 aa).

The next 2 helical transmembrane spans lie at 26–48 (FFWAGISTIGGVGFLLAGLSSYF) and 63–85 (FIPQGVALLFYGVAGSTVAGYLW).

The protein belongs to the Ycf4 family.

It localises to the cellular thylakoid membrane. In terms of biological role, seems to be required for the assembly of the photosystem I complex. This chain is Photosystem I assembly protein Ycf4, found in Synechocystis sp. (strain ATCC 27184 / PCC 6803 / Kazusa).